Here is a 51-residue protein sequence, read N- to C-terminus: Lantibiotic streptococcin A-M49 (51 aa).

Residues 1–25 constitute a propeptide that is removed on maturation; the sequence is MTKEHEIINSIQEVSLEELDQIIGA. Cross-links (beta-methyllanthionine (Thr-Cys)) lie at residues 33 to 38 and 42 to 50; these read TISHEC and TWAFLATCC. Residues 35-49 constitute a cross-link (lanthionine (Ser-Cys)); it reads SHECHLNTWAFLATC. The residue at position 48 (threonine 48) is a 2,3-didehydrobutyrine.

It belongs to the type A lantibiotic family. Post-translationally, maturation of lantibiotics involves the enzymatic conversion of Thr, and Ser into dehydrated AA and the formation of thioether bonds with cysteine. This is followed by membrane translocation and cleavage of the modified precursor.

It is found in the secreted. The protein localises to the cell surface. Lanthionine-containing peptide antibiotic (lantibiotic) active on certain Gram-positive bacteria. The bactericidal activity of lantibiotics is based on depolarization of energized bacterial cytoplasmic membranes, initiated by the formation of aqueous transmembrane pores. The polypeptide is Lantibiotic streptococcin A-M49 (scnA') (Streptococcus pyogenes serotype M49).